The chain runs to 325 residues: GMP reductase (325 aa).

Cys-174 acts as the Thioimidate intermediate in catalysis. Position 203–226 (203–226 (IIADGGIRTHGDIAKSIRFGATMV)) interacts with NADP(+).

This sequence belongs to the IMPDH/GMPR family. GuaC type 2 subfamily.

It carries out the reaction IMP + NH4(+) + NADP(+) = GMP + NADPH + 2 H(+). Functionally, catalyzes the irreversible NADPH-dependent deamination of GMP to IMP. It functions in the conversion of nucleobase, nucleoside and nucleotide derivatives of G to A nucleotides, and in maintaining the intracellular balance of A and G nucleotides. The polypeptide is GMP reductase (Helicobacter pylori (strain G27)).